Consider the following 1243-residue polypeptide: ATP-dependent helicase/nuclease subunit A (1243 aa).

The region spanning 2-475 (VNWTKEQEEA…IDLARNFRSR (474 aa)) is the UvrD-like helicase ATP-binding domain. ATP is bound at residue 23 to 30 (AAAGSGKT). Positions 502–803 (AAELIYGNKM…RIMTIHKSKG (302 aa)) constitute a UvrD-like helicase C-terminal domain.

This sequence belongs to the helicase family. AddA subfamily. Heterodimer of AddA and AddB/RexB. Mg(2+) serves as cofactor.

It catalyses the reaction Couples ATP hydrolysis with the unwinding of duplex DNA by translocating in the 3'-5' direction.. It carries out the reaction ATP + H2O = ADP + phosphate + H(+). The heterodimer acts as both an ATP-dependent DNA helicase and an ATP-dependent, dual-direction single-stranded exonuclease. Recognizes the chi site generating a DNA molecule suitable for the initiation of homologous recombination. The AddA nuclease domain is required for chi fragment generation; this subunit has the helicase and 3' -&gt; 5' nuclease activities. This Oceanobacillus iheyensis (strain DSM 14371 / CIP 107618 / JCM 11309 / KCTC 3954 / HTE831) protein is ATP-dependent helicase/nuclease subunit A.